Here is a 167-residue protein sequence, read N- to C-terminus: D-aminoacyl-tRNA deacylase 2 (167 aa).

The short motif at Gly-159–Pro-160 is the Gly-transPro motif, allows the protein to recognize chirality of D-amino acids element.

This sequence belongs to the DTD family. As to quaternary structure, homodimer.

The protein resides in the cytoplasm. The catalysed reaction is a D-aminoacyl-tRNA + H2O = a tRNA + a D-alpha-amino acid + H(+). It catalyses the reaction glycyl-tRNA(Ala) + H2O = tRNA(Ala) + glycine + H(+). The enzyme catalyses D-tyrosyl-tRNA(Tyr) + H2O = D-tyrosine + tRNA(Tyr). It carries out the reaction L-alanyl-tRNA(Thr) + H2O = tRNA(Thr) + L-alanine + H(+). Its function is as follows. Deacylates mischarged D-aminoacyl-tRNAs. Also deacylates mischarged glycyl-tRNA(Ala), protecting cells against glycine mischarging by AlaRS. Probably acts by rejecting L-amino acids from its binding site rather than specific recognition of D-amino acids. Catalyzes the hydrolysis of D-tyrosyl-tRNA(Tyr), has no activity on correctly charged L-tyrosyl-tRNA(Tyr). By recycling D-aminoacyl-tRNA to D-amino acids and free tRNA molecules, this enzyme counteracts the toxicity associated with the formation of D-aminoacyl-tRNA entities in vivo and helps enforce protein L-homochirality. In contrast to DTD1, deacylates L-Ala mischarged on tRNA(Thr)(G4.U69) by alanine-tRNA ligase AARS. Can deacylate L-Ala due to a relaxed specificity for substrate chirality caused by the trans conformation of the Gly-Pro motif in the active site. Also hydrolyzes correctly charged, achiral, glycyl-tRNA(Gly) in vitro, although in vivo EEF1A1/EF-Tu may protect cognate achiral glycyl-tRNA(Gly) from DTD2-mediated deacetylation. The chain is D-aminoacyl-tRNA deacylase 2 (DTD2) from Gallus gallus (Chicken).